Consider the following 187-residue polypeptide: Elongation factor P (187 aa).

It belongs to the elongation factor P family.

Its subcellular location is the cytoplasm. The protein operates within protein biosynthesis; polypeptide chain elongation. In terms of biological role, involved in peptide bond synthesis. Stimulates efficient translation and peptide-bond synthesis on native or reconstituted 70S ribosomes in vitro. Probably functions indirectly by altering the affinity of the ribosome for aminoacyl-tRNA, thus increasing their reactivity as acceptors for peptidyl transferase. The sequence is that of Elongation factor P from Parvibaculum lavamentivorans (strain DS-1 / DSM 13023 / NCIMB 13966).